We begin with the raw amino-acid sequence, 472 residues long: Argininosuccinate lyase (472 aa).

This sequence belongs to the lyase 1 family. Argininosuccinate lyase subfamily.

The protein localises to the cytoplasm. It carries out the reaction 2-(N(omega)-L-arginino)succinate = fumarate + L-arginine. The protein operates within amino-acid biosynthesis; L-arginine biosynthesis; L-arginine from L-ornithine and carbamoyl phosphate: step 3/3. This chain is Argininosuccinate lyase, found in Polynucleobacter asymbioticus (strain DSM 18221 / CIP 109841 / QLW-P1DMWA-1) (Polynucleobacter necessarius subsp. asymbioticus).